Reading from the N-terminus, the 153-residue chain is Histone H2B.8 (153 aa).

Basic and acidic residues-rich tracts occupy residues 1–28 (MAPKAEKKPAAKKPAEEEPAAEKAEKAP) and 36–53 (EKRLPAGKGEKGSGEGKK). Residues 1–61 (MAPKAEKKPA…KKAGRKKAKK (61 aa)) are disordered. Residues Lys7 and Lys37 each carry the N6-acetyllysine modification. A Glycyl lysine isopeptide (Lys-Gly) (interchain with G-Cter in ubiquitin) cross-link involves residue Lys149.

This sequence belongs to the histone H2B family. In terms of assembly, the nucleosome is a histone octamer containing two molecules each of H2A, H2B, H3 and H4 assembled in one H3-H4 heterotetramer and two H2A-H2B heterodimers. The octamer wraps approximately 147 bp of DNA. Post-translationally, can be acetylated to form H2BK6ac and H2BK33ac. Monoubiquitinated by BRE1 to form H2BK143ub1 and deubiquitinated by UBP26. Required for heterochromatic histone H3 di- and trimethylation at H3K4me. May give a specific tag for epigenetic transcriptional activation.

Its subcellular location is the nucleus. The protein localises to the chromosome. In terms of biological role, core component of nucleosome. Nucleosomes wrap and compact DNA into chromatin, limiting DNA accessibility to the cellular machineries which require DNA as a template. Histones thereby play a central role in transcription regulation, DNA repair, DNA replication and chromosomal stability. DNA accessibility is regulated via a complex set of post-translational modifications of histones, also called histone code, and nucleosome remodeling. This Oryza sativa subsp. indica (Rice) protein is Histone H2B.8 (H2B.8).